A 367-amino-acid polypeptide reads, in one-letter code: Probable neutral protease 2 homolog MCYG_00239 (367 aa).

The signal sequence occupies residues 1–19; sequence MQVLVALAALSSLAAPVVG. A propeptide spanning residues 20-190 is cleaved from the precursor; sequence FSIPRGVPVS…DGPFTRIDKR (171 aa). Intrachain disulfides connect Cys-198/Cys-268, Cys-275/Cys-293, and Cys-307/Cys-367. His-318 contributes to the Zn(2+) binding site. Glu-319 is an active-site residue. Zn(2+) is bound by residues His-322 and Asp-333.

The protein belongs to the peptidase M35 family. Zn(2+) serves as cofactor.

Its subcellular location is the secreted. It carries out the reaction Preferential cleavage of bonds with hydrophobic residues in P1'. Also 3-Asn-|-Gln-4 and 8-Gly-|-Ser-9 bonds in insulin B chain.. Probable secreted metalloprotease that shows high activities on basic nuclear substrates such as histone and protamine. May be involved in virulence. This Arthroderma otae (strain ATCC MYA-4605 / CBS 113480) (Microsporum canis) protein is Probable neutral protease 2 homolog MCYG_00239.